The chain runs to 57 residues: UPF0391 membrane protein RPD_3366 (57 aa).

Transmembrane regions (helical) follow at residues 4–24 (WVVTFLVVALIAGILGFGGIA) and 30–50 (IAKVIFFIAVVLFLISAVVGL).

This sequence belongs to the UPF0391 family.

The protein localises to the cell membrane. The sequence is that of UPF0391 membrane protein RPD_3366 from Rhodopseudomonas palustris (strain BisB5).